Here is a 199-residue protein sequence, read N- to C-terminus: MSACPAPRSPFRWLHAFTLCLLLAVLAGCVSVPKPMAGAGEDVFSRVGRFAITVTESDGKQQAVQGGFAWRDDGGSYLLDLTNPLGSTEARVEGRPGMAVLTRANGERLAAEHPDALAEDALGSPVPVTGLRDWLRGRLMAGAAPDGLERDAQGRPTAFEQDGWNARLSRYDAQGPQLLVLQRQEPGRRILVRLVITQP.

A signal peptide spans 1-28 (MSACPAPRSPFRWLHAFTLCLLLAVLAG). Cys-29 is lipidated: N-palmitoyl cysteine. The S-diacylglycerol cysteine moiety is linked to residue Cys-29.

The protein belongs to the LolB family. In terms of assembly, monomer.

Its subcellular location is the cell outer membrane. Plays a critical role in the incorporation of lipoproteins in the outer membrane after they are released by the LolA protein. The chain is Outer-membrane lipoprotein LolB from Bordetella bronchiseptica (strain ATCC BAA-588 / NCTC 13252 / RB50) (Alcaligenes bronchisepticus).